A 1161-amino-acid polypeptide reads, in one-letter code: DNA-directed RNA polymerase subunit beta (1161 aa).

Belongs to the RNA polymerase beta chain family. As to quaternary structure, the RNAP catalytic core consists of 2 alpha, 1 beta, 1 beta' and 1 omega subunit. When a sigma factor is associated with the core the holoenzyme is formed, which can initiate transcription.

It catalyses the reaction RNA(n) + a ribonucleoside 5'-triphosphate = RNA(n+1) + diphosphate. Functionally, DNA-dependent RNA polymerase catalyzes the transcription of DNA into RNA using the four ribonucleoside triphosphates as substrates. This chain is DNA-directed RNA polymerase subunit beta, found in Streptomyces avermitilis (strain ATCC 31267 / DSM 46492 / JCM 5070 / NBRC 14893 / NCIMB 12804 / NRRL 8165 / MA-4680).